A 794-amino-acid polypeptide reads, in one-letter code: Furin (794 aa).

The N-terminal stretch at 1–26 (MELRPWLLWVVAATGTLVLLAADAQG) is a signal peptide. Positions 27–107 (QKVFTNTWAV…QQVAKRRTKR (81 aa)) are cleaved as a propeptide — inhibition peptide. At 108 to 715 (DVYQEPTDPK…AGLLPSHLPE (608 aa)) the chain is on the lumenal side. Asp-115 is a binding site for Ca(2+). In terms of domain architecture, Peptidase S8 spans 121–435 (QWYLSGVTQR…YGLLDAGAMV (315 aa)). Asp-153 functions as the Charge relay system in the catalytic mechanism. Asp-154 is a binding site for substrate. Positions 162, 174, 179, and 181 each coordinate Ca(2+). Positions 162 to 183 (DLAGNYDPGASFDVNDQDPDPQ) are disordered. 191-192 (DN) serves as a coordination point for substrate. His-194 serves as the catalytic Charge relay system. Ca(2+) is bound by residues Val-205, Asn-208, Val-210, and Gly-212. 2 disulfide bridges follow: Cys-211–Cys-360 and Cys-303–Cys-333. Residues Glu-236, 253–258 (SWGPED), Asp-264, and 292–295 (ASGN) each bind substrate. Asp-258 contacts Ca(2+). Residue Asp-301 participates in Ca(2+) binding. Substrate-binding residues include Asp-306 and Tyr-308. Glu-331 contributes to the Ca(2+) binding site. The Charge relay system role is filled by Ser-368. Ser-368 provides a ligand contact to substrate. Asn-387 and Asn-440 each carry an N-linked (GlcNAc...) asparagine glycan. In terms of domain architecture, P/Homo B spans 444–576 (VAPQRKCIID…TLVLYGTAPE (133 aa)). Cys-450 and Cys-474 are joined by a disulfide. The Cell attachment site motif lies at 498–500 (RGD). N-linked (GlcNAc...) asparagine glycosylation occurs at Asn-553. FU repeat units lie at residues 577–620 (GLPV…GFAP) and 638–681 (ASVC…QSQS). Positions 673 to 696 (QTCSRQSQSSRESPPQQQPPRLPP) are disordered. The segment covering 676–687 (SRQSQSSRESPP) has biased composition (low complexity). A helical transmembrane segment spans residues 716–738 (VVAGLSCAFIVLVFVTVFLVLQL). The Cytoplasmic segment spans residues 739–794 (RSGFSFRGVKVYTMDRGLISYKGLPPEAWQEECPSDSEEDEGRGERTAFIKDQSAL). The segment at 759–762 (YKGL) is cell surface signal. Positions 767 to 780 (WQEECPSDSEEDEG) are enriched in acidic residues. The interval 767 to 794 (WQEECPSDSEEDEGRGERTAFIKDQSAL) is disordered. Ser-773 and Ser-775 each carry phosphoserine; by CK2. Residues 773–779 (SDSEEDE) carry the Trans Golgi network signal motif.

This sequence belongs to the peptidase S8 family. Furin subfamily. In terms of assembly, interacts with FLNA. Binds to PACS1 which mediates TGN localization and connection to clathrin adapters. Interacts with LAMP1, LAMP2 and LAMP3. Ca(2+) serves as cofactor. In terms of processing, the inhibition peptide, which plays the role of an intramolecular chaperone, is autocatalytically removed in the endoplasmic reticulum (ER) and remains non-covalently bound to furin as a potent autoinhibitor. Following transport to the trans Golgi, a second cleavage within the inhibition propeptide results in propeptide dissociation and furin activation. Phosphorylation is required for TGN localization of the endoprotease. In vivo, exists as di-, mono- and non-phosphorylated forms. Seems to be expressed ubiquitously.

It localises to the golgi apparatus. The protein resides in the trans-Golgi network membrane. Its subcellular location is the cell membrane. The protein localises to the secreted. It is found in the endosome membrane. It catalyses the reaction Release of mature proteins from their proproteins by cleavage of -Arg-Xaa-Yaa-Arg-|-Zaa- bonds, where Xaa can be any amino acid and Yaa is Arg or Lys. Releases albumin, complement component C3 and von Willebrand factor from their respective precursors.. Its activity is regulated as follows. Inhibited by the not secondly cleaved propeptide. Inhibited by m-guanidinomethyl-phenylacetyl-Arg-Val-Arg-(amidomethyl)-benzamidine (m-guanidinomethyl-Phac-RVR-Amb) and 4-guanidinomethyl-phenylacetyl-Arg-Tle-Arg-4-amidinobenzylamide (MI-1148). Inhibited by Decanoyl-Arg-Val-Lys-Arg-chloromethylketone (decanoyl-RVKR-CMK). Inhibited by heparin/heparan sulfate-binding. Functionally, ubiquitous endoprotease within constitutive secretory pathways capable of cleavage at the RX(K/R)R consensus motif. Mediates processing of TGFB1, an essential step in TGF-beta-1 activation. Converts through proteolytic cleavage the non-functional Brain natriuretic factor prohormone into its active hormone BNP(1-32). By mediating processing of accessory subunit ATP6AP1/Ac45 of the V-ATPase, regulates the acidification of dense-core secretory granules in islets of Langerhans cells. In terms of biological role, (Microbial infection) Cleaves and activates diphtheria toxin DT. Its function is as follows. (Microbial infection) Cleaves and activates anthrax toxin protective antigen (PA). (Microbial infection) Cleaves and activates HIV-1 virus Envelope glycoprotein gp160. Functionally, (Microbial infection) Required for H7N1 and H5N1 influenza virus infection probably by cleaving hemagglutinin. In terms of biological role, (Microbial infection) Able to cleave S.pneumoniae serine-rich repeat protein PsrP. Its function is as follows. (Microbial infection) Facilitates human coronaviruses EMC and SARS-CoV-2 infections by proteolytically cleaving the spike protein at the monobasic S1/S2 cleavage site. This cleavage is essential for spike protein-mediated cell-cell fusion and entry into human lung cells. (Microbial infection) Facilitates mumps virus infection by proteolytically cleaving the viral fusion protein F. The polypeptide is Furin (Homo sapiens (Human)).